We begin with the raw amino-acid sequence, 176 residues long: Large ribosomal subunit protein uL16 (176 aa).

This sequence belongs to the universal ribosomal protein uL16 family.

In Thermoplasma volcanium (strain ATCC 51530 / DSM 4299 / JCM 9571 / NBRC 15438 / GSS1), this protein is Large ribosomal subunit protein uL16.